The primary structure comprises 62 residues: Photosystem II reaction center protein Z (62 aa).

The next 2 membrane-spanning stretches (helical) occupy residues 8-28 (AVFA…VVFA) and 41-61 (FSGT…NSLI).

It belongs to the PsbZ family. In terms of assembly, PSII is composed of 1 copy each of membrane proteins PsbA, PsbB, PsbC, PsbD, PsbE, PsbF, PsbH, PsbI, PsbJ, PsbK, PsbL, PsbM, PsbT, PsbY, PsbZ, Psb30/Ycf12, at least 3 peripheral proteins of the oxygen-evolving complex and a large number of cofactors. It forms dimeric complexes.

The protein resides in the plastid. It is found in the chloroplast thylakoid membrane. In terms of biological role, may control the interaction of photosystem II (PSII) cores with the light-harvesting antenna, regulates electron flow through the 2 photosystem reaction centers. PSII is a light-driven water plastoquinone oxidoreductase, using light energy to abstract electrons from H(2)O, generating a proton gradient subsequently used for ATP formation. The polypeptide is Photosystem II reaction center protein Z (Daucus carota (Wild carrot)).